The following is a 282-amino-acid chain: 4-hydroxy-3-methylbut-2-enyl diphosphate reductase (282 aa).

A [4Fe-4S] cluster-binding site is contributed by C14. H43 and H78 together coordinate (2E)-4-hydroxy-3-methylbut-2-enyl diphosphate. Dimethylallyl diphosphate-binding residues include H43 and H78. Positions 43 and 78 each coordinate isopentenyl diphosphate. A [4Fe-4S] cluster-binding site is contributed by C100. Residue H128 participates in (2E)-4-hydroxy-3-methylbut-2-enyl diphosphate binding. H128 provides a ligand contact to dimethylallyl diphosphate. An isopentenyl diphosphate-binding site is contributed by H128. Residue E130 is the Proton donor of the active site. T164 contributes to the (2E)-4-hydroxy-3-methylbut-2-enyl diphosphate binding site. C192 serves as a coordination point for [4Fe-4S] cluster. 4 residues coordinate (2E)-4-hydroxy-3-methylbut-2-enyl diphosphate: S220, S221, N222, and S266. Residues S220, S221, N222, and S266 each coordinate dimethylallyl diphosphate. Isopentenyl diphosphate-binding residues include S220, S221, N222, and S266.

This sequence belongs to the IspH family. Requires [4Fe-4S] cluster as cofactor.

The catalysed reaction is isopentenyl diphosphate + 2 oxidized [2Fe-2S]-[ferredoxin] + H2O = (2E)-4-hydroxy-3-methylbut-2-enyl diphosphate + 2 reduced [2Fe-2S]-[ferredoxin] + 2 H(+). The enzyme catalyses dimethylallyl diphosphate + 2 oxidized [2Fe-2S]-[ferredoxin] + H2O = (2E)-4-hydroxy-3-methylbut-2-enyl diphosphate + 2 reduced [2Fe-2S]-[ferredoxin] + 2 H(+). Its pathway is isoprenoid biosynthesis; dimethylallyl diphosphate biosynthesis; dimethylallyl diphosphate from (2E)-4-hydroxy-3-methylbutenyl diphosphate: step 1/1. The protein operates within isoprenoid biosynthesis; isopentenyl diphosphate biosynthesis via DXP pathway; isopentenyl diphosphate from 1-deoxy-D-xylulose 5-phosphate: step 6/6. Functionally, catalyzes the conversion of 1-hydroxy-2-methyl-2-(E)-butenyl 4-diphosphate (HMBPP) into a mixture of isopentenyl diphosphate (IPP) and dimethylallyl diphosphate (DMAPP). Acts in the terminal step of the DOXP/MEP pathway for isoprenoid precursor biosynthesis. The protein is 4-hydroxy-3-methylbut-2-enyl diphosphate reductase of Clostridium perfringens (strain SM101 / Type A).